A 389-amino-acid chain; its full sequence is Probable serine/threonine-protein kinase PBL11 (389 aa).

G2 carries N-myristoyl glycine lipidation. C4 carries the S-palmitoyl cysteine lipid modification. In terms of domain architecture, Protein kinase spans 68–353; it reads FRPDSVVGEG…NEIVKTMEEL (286 aa). ATP contacts are provided by residues 74-82 and K106; that span reads VGEGGFGCV. Position 151 is a phosphotyrosine (Y151). The active-site Proton acceptor is the D203. Phosphoserine occurs at positions 207 and 237. Residues T238 and T243 each carry the phosphothreonine modification. Y251 is modified (phosphotyrosine).

It belongs to the protein kinase superfamily. Ser/Thr protein kinase family. As to expression, roots, leaves and stems.

The protein resides in the cell membrane. The catalysed reaction is L-seryl-[protein] + ATP = O-phospho-L-seryl-[protein] + ADP + H(+). It carries out the reaction L-threonyl-[protein] + ATP = O-phospho-L-threonyl-[protein] + ADP + H(+). Functionally, may play a role in the regulation of plant growth and development. May be involved in plant defense signaling. The polypeptide is Probable serine/threonine-protein kinase PBL11 (Arabidopsis thaliana (Mouse-ear cress)).